The following is a 269-amino-acid chain: Formamidopyrimidine-DNA glycosylase (269 aa).

Proline 2 (schiff-base intermediate with DNA) is an active-site residue. Glutamate 3 (proton donor) is an active-site residue. Lysine 57 serves as the catalytic Proton donor; for beta-elimination activity. DNA contacts are provided by histidine 90, arginine 109, and lysine 150. The FPG-type zinc finger occupies 235–269 (QVYGRKGEPCRVCGTPIVATKHAQRATFYCRHCQK). Arginine 259 serves as the catalytic Proton donor; for delta-elimination activity.

This sequence belongs to the FPG family. As to quaternary structure, monomer. It depends on Zn(2+) as a cofactor.

The enzyme catalyses Hydrolysis of DNA containing ring-opened 7-methylguanine residues, releasing 2,6-diamino-4-hydroxy-5-(N-methyl)formamidopyrimidine.. It catalyses the reaction 2'-deoxyribonucleotide-(2'-deoxyribose 5'-phosphate)-2'-deoxyribonucleotide-DNA = a 3'-end 2'-deoxyribonucleotide-(2,3-dehydro-2,3-deoxyribose 5'-phosphate)-DNA + a 5'-end 5'-phospho-2'-deoxyribonucleoside-DNA + H(+). In terms of biological role, involved in base excision repair of DNA damaged by oxidation or by mutagenic agents. Acts as a DNA glycosylase that recognizes and removes damaged bases. Has a preference for oxidized purines, such as 7,8-dihydro-8-oxoguanine (8-oxoG). Has AP (apurinic/apyrimidinic) lyase activity and introduces nicks in the DNA strand. Cleaves the DNA backbone by beta-delta elimination to generate a single-strand break at the site of the removed base with both 3'- and 5'-phosphates. The protein is Formamidopyrimidine-DNA glycosylase of Salmonella choleraesuis (strain SC-B67).